Consider the following 776-residue polypeptide: Systemic RNA interference defective protein 1 (776 aa).

The N-terminal stretch at 1 to 17 (MIRVYLIILMHLVIGLT) is a signal peptide. At 18–319 (QNNSTTPSPI…ENQSYAVPTA (302 aa)) the chain is on the extracellular side. 8 N-linked (GlcNAc...) asparagine glycosylation sites follow: Asn19, Asn20, Asn32, Asn205, Asn210, Asn234, Asn290, and Asn311. Residues 22–312 (TTPSPIITSS…SFEFKKLENQ (291 aa)) form an involved in dsRNA-binding region. A helical membrane pass occupies residues 320 to 340 (LMMIFLTTPCLLFLPIVINII). The Cytoplasmic segment spans residues 341 to 429 (KNSRKLAPSQ…KQDSLSLHGQ (89 aa)). The disordered stretch occupies residues 360–390 (PSEQRDMDLSHDEQQNTSSELENNGEIPAAE). A compositionally biased stretch (basic and acidic residues) spans 362–373 (EQRDMDLSHDEQ). Residues 430-450 (MLQYPVAIILPVLMHTAIEFH) form a helical membrane-spanning segment. At 451–481 (KWTTSTMANRDEMCFHNHACARPLGELRAWN) the chain is on the extracellular side. A helical transmembrane segment spans residues 482–502 (NIITNIGYTLYGAIFIVLSIC). Residues 503 to 510 (RRGRHEYS) are Cytoplasmic-facing. The chain crosses the membrane as a helical span at residues 511-531 (HVFGTYECTLLDVTIGVFMVL). The Extracellular segment spans residues 532–543 (QSIASATYHICP). The chain crosses the membrane as a helical span at residues 544 to 564 (SDVAFQFDTPCIQVICGLLMV). Residues 565–575 (RQWFVRHESPS) lie on the Cytoplasmic side of the membrane. The helical transmembrane segment at 576 to 596 (PAYTNILLVGVVSLNFLISAF) threads the bilayer. At 597-599 (SKT) the chain is on the extracellular side. A helical transmembrane segment spans residues 600-620 (SYVRFIIAVIHVIVVGSICLA). At 621–633 (KERSLGSEKLKTR) the chain is on the cytoplasmic side. A helical membrane pass occupies residues 634–654 (FFIMAFSMGNFAAIVMYLTLS). The Extracellular portion of the chain corresponds to 655 to 659 (AFHLN). A helical membrane pass occupies residues 660-680 (QIATYCFIINCIMYLMYYGCM). Over 681 to 691 (KVLHSERITSK) the chain is Cytoplasmic. A helical membrane pass occupies residues 692 to 712 (AKLCGALSLLAWAVAGFFFFQ). The Extracellular portion of the chain corresponds to 713–741 (DDTDWTRSAAASRALNKPCLLLGFFGSHD). The chain crosses the membrane as a helical span at residues 742–762 (LWHIFGALAGLFTFIFVSFVD). Over 763-776 (DDLINTRKTSINIF) the chain is Cytoplasmic.

This sequence belongs to the SID1 family. In terms of assembly, may self-associate to form multimers. As to expression, expressed in most non-neuronal cells, including body wall muscle cells.

The protein resides in the cell membrane. Plays a role in RNA-mediated gene silencing by acting cell-autonomously as a channel for the transport of double-stranded RNA (dsRNA) between cells. Mediates the spread of dsRNA and subsequent silencing of genes in cells distant from the site of dsRNA introduction. Selective for dsRNA. Preferentially binds long dsRNA, from 50 base pairs up to 700. Short 20 base-pair long molecules are not bound. May also bind dsDNA, but with lower affinity. Binding may be sequence-independent. Required for avoidance behavior induced by small RNAs derived from pathogenic bacteria such as P.aeruginosa. This Caenorhabditis elegans protein is Systemic RNA interference defective protein 1.